We begin with the raw amino-acid sequence, 170 residues long: Siroheme decarboxylase NirL subunit (170 aa).

It belongs to the Ahb/Nir family. As to quaternary structure, probably forms a complex composed of NirD, NirL, NirG and NirH. All proteins are required for the total conversion of siroheme to didecarboxysiroheme.

It catalyses the reaction siroheme + 2 H(+) = 12,18-didecarboxysiroheme + 2 CO2. Its pathway is porphyrin-containing compound metabolism. Its function is as follows. Involved in heme d1 biosynthesis. Catalyzes the decarboxylation of siroheme into didecarboxysiroheme. The chain is Siroheme decarboxylase NirL subunit from Stutzerimonas stutzeri (Pseudomonas stutzeri).